Here is a 443-residue protein sequence, read N- to C-terminus: MFISVLLILFALCVTLIPEAHYHMVRVWSFVATIIPMWVVTWMWWNFDASGHGLQMLVILGRSHLAFGIDGVALSLMLLTTVLFPICMMLLRTVAGFMTFILLEVLVLSALCVLDLLGFYILFEASLILLFLLIGRAPYGSLEAAYKIVLYTMAGSLVLLPTLFMIYSECGTTNVLYMTCAYNHQTVLGWGLLAVLAVKIPLMPVHLWLPEAHVAAPTAGSVLLAGVLLKLGGIGFLRFMLPVVPEFCVSVFPLVSTLCLVSFLFSTLSTLRQIDLKKIVAYSSIAHMSMVTLAIFSQSEFSAYSSSFLMIAHGLISPALFLIVGILYDRAHTKFILYFSGLGASMPIGSTLFFLFTLGNLAFPLFPNFIAEVLCMVSIFAVHELLAYVFCVCQVLGAAYGFWAFNRVVHGLPRGPADVTRTEFHTVLPLLIGAVWLGIKPMA.

15 helical membrane passes run 1-21, 27-47, 71-91, 93-113, 114-134, 148-168, 187-207, 217-237, 247-267, 279-299, 308-328, 335-355, 362-382, 385-405, and 423-443; these read MFIS…PEAH, VWSF…WWNF, GVAL…MMLL, TVAG…ALCV, LDLL…FLLI, IVLY…MIYS, VLGW…PVHL, PTAG…IGFL, FCVS…LFST, IVAY…FSQS, FLMI…GILY, FILY…LFFL, AFPL…IFAV, LLAY…FWAF, and EFHT…KPMA.

Belongs to the complex I subunit 4 family.

The protein localises to the mitochondrion membrane. It carries out the reaction a ubiquinone + NADH + 5 H(+)(in) = a ubiquinol + NAD(+) + 4 H(+)(out). Functionally, core subunit of the mitochondrial membrane respiratory chain NADH dehydrogenase (Complex I) that is believed to belong to the minimal assembly required for catalysis. Complex I functions in the transfer of electrons from NADH to the respiratory chain. The immediate electron acceptor for the enzyme is believed to be ubiquinone. This chain is NADH-ubiquinone oxidoreductase chain 4 (ND4), found in Chlamydomonas reinhardtii (Chlamydomonas smithii).